Consider the following 397-residue polypeptide: Acylalkylpyrone synthase csyB (397 aa).

CoA is bound by residues K50 and 50 to 57; that span reads KMLEINRK. C155 (nucleophile) is an active-site residue. 214-215 serves as a coordination point for substrate; sequence GD. CoA is bound by residues I267, G312, 312–315, Y314, and A315; that span reads GGYA. H377 is a catalytic residue.

This sequence belongs to the thiolase-like superfamily. Chalcone/stilbene synthases family. Homodimer.

Its function is as follows. Acylalkylpyrone synthase that catalyzes not only the polyketide chain elongation but also the one-pot condensation of two beta-ketoacyl units to produce the 3-acyl-4-hydroxy-6-alkyl-alpha-pyrone (AcAP) scaffold, a precursor of csypyrone B. The enzyme reaction is initiated by the loading of acetoacetyl-CoA onto Cys-155, and subsequent thioester bond cleavage by the nucleophilic water generates the beta-keto acid intermediate, which is placed within a pocket. The second beta-ketoacyl unit is then produced by polyketide chain elongation of fatty acyl-CoA with one molecule of malonyl-CoA, and the condensation with the beta-ketoacid generates the final products. Csypyrone B1 is the major product and contains a propanoic acid side-chain, whereas csypyrones B2 and B3 are minor compounds that contain butyric or pentanoic acid side-chains, respectively. The chain is Acylalkylpyrone synthase csyB from Aspergillus oryzae (strain ATCC 42149 / RIB 40) (Yellow koji mold).